A 435-amino-acid polypeptide reads, in one-letter code: Mitogen-activated protein kinase HOG1 (435 aa).

An N-acetylthreonine modification is found at Thr2. The region spanning 23–302 is the Protein kinase domain; the sequence is YNDLNPVGMG…AADALAHPYS (280 aa). ATP-binding positions include 29–37 and Lys52; that span reads VGMGAFGLV. The active-site Proton acceptor is Asp144. Positions 156 and 161 each coordinate arsenite. A Phosphothreonine; by PBS2 modification is found at Thr174. The short motif at 174–176 is the TXY element; the sequence is TGY. Tyr176 is subject to Phosphotyrosine; by PBS2. Cys205 is a binding site for arsenite.

Belongs to the protein kinase superfamily. Ser/Thr protein kinase family. MAP kinase subfamily. HOG1 sub-subfamily. As to quaternary structure, interacts with CDC37, HOT1, KIN28, PTP2, PTP3, RBP1, RCK2, RPD3, SIC1, SMP1 and SIN4. Mg(2+) is required as a cofactor. In terms of processing, activated by PBS2-mediated concomitant phosphorylation at Thr-174 and Tyr-176. Post-translationally, dually phosphorylated on Thr-174 and Tyr-176, which activates the enzyme.

The protein localises to the cytoplasm. The protein resides in the nucleus. It carries out the reaction L-seryl-[protein] + ATP = O-phospho-L-seryl-[protein] + ADP + H(+). It catalyses the reaction L-threonyl-[protein] + ATP = O-phospho-L-threonyl-[protein] + ADP + H(+). Its activity is regulated as follows. Activated by tyrosine and threonine phosphorylation. Inactivated by dephosphorylation via recruitment of PTC1 to the PBS2-HOG1 complex after adaptation to osmotic stress. PTP2 and PTP3 inactivate HOG1 by dephosphorylating Tyr-176, while the PP2Cs PTC1 and PTC2 or PTC3 dephosphorylate Thr-174 in the activation loop. Proline-directed serine/threonine-protein kinase involved in a signal transduction pathway that is activated by changes in the osmolarity of the extracellular environment. Controls osmotic regulation of transcription via the stress response element (STRE) in promoters of target genes. Upon osmotic shock, associates with the SKO1-SSN6-TUP1 complex, phosphorylates SKO1, and converts it into an activator that subsequently recruits Swi/Snf and SAGA complexes. Activates the SMP1 transcription factor and the RCK2 kinase, both also involved in the regulation of the expression of a subset of osmotic stress-related genes. Phosphorylation of HSL1 by HOG1 leads to a G2 arrest essential for cell survival at high osmolarity. Also mediates cell-cycle arrest in G1 phase by the dual targeting of SIC1. Phosphorylates methyltransferase DOT1 at least on 'Ser-565' and 'Thr-576'. Regulates MFA2 ARE-mediated translation in response to carbon source. Targets RPD3 histone deacetylase to osmoresponsive promoters to induce gene expression on stress. Required for the Golgi apparatus localization of MNN1. Plays an essential role in maintaining water homeostasis, arsenite detoxification, copper-resistance, cold-resistance, hydrogen peroxide response, adaptation to citric acid stress, and repression of the mating pathway activity. Functions as an arsenic sensor and effector via direct binding to arsenic and subsequent phosphorylation of the ARR1 transcription factor. The polypeptide is Mitogen-activated protein kinase HOG1 (HOG1) (Saccharomyces cerevisiae (strain ATCC 204508 / S288c) (Baker's yeast)).